Reading from the N-terminus, the 263-residue chain is Histidine racemase (263 aa).

Catalysis depends on Cys-67, which acts as the Proton acceptor. The Proton donor role is filled by Cys-209.

Belongs to the histidine racemase family. As to quaternary structure, homodimer.

It carries out the reaction L-histidine = D-histidine. In terms of biological role, cofactor-independent isomerase that catalyzes the reversible conversion of L-histidine to D-histidine. May play a role in growth of F.nucleatum. In Fusobacterium nucleatum subsp. nucleatum (strain ATCC 23726 / VPI 4351), this protein is Histidine racemase.